The sequence spans 542 residues: 4-coumarate--CoA ligase-like 5 (542 aa).

The ATP site is built by Ser-204, Ser-205, Gly-206, Thr-207, Thr-208, and Lys-212. Position 262 (Phe-262) interacts with (E)-4-coumaroyl-AMP. CoA is bound at residue Arg-282. An SBD1 region spans residues 284–353 (DFIAALRAIE…SVFPNVELVQ (70 aa)). (E)-4-coumaroyl-AMP-binding residues include Gly-331, Gln-353, Gly-354, and Thr-358. ATP is bound by residues Gln-353, Gly-354, Thr-358, Asp-418, and Arg-433. Residues 354-397 (GYGLTESSGAVAATVGPEESKAYGSVGKLGSHLQAKIVDPSTGY) form an SBD2 region. Residues Lys-435 and Lys-439 each coordinate (E)-4-coumaroyl-AMP. CoA-binding residues include Lys-441 and Gly-442. Residue Lys-524 coordinates ATP.

Belongs to the ATP-dependent AMP-binding enzyme family. Mg(2+) serves as cofactor.

The enzyme catalyses (E)-4-coumarate + ATP + CoA = (E)-4-coumaroyl-CoA + AMP + diphosphate. It carries out the reaction (E)-4-coumarate + ATP + H(+) = (E)-4-coumaroyl-AMP + diphosphate. It catalyses the reaction (E)-4-coumaroyl-AMP + CoA = (E)-4-coumaroyl-CoA + AMP + H(+). Functionally, carboxylate--CoA ligase that may use 4-coumarate as substrate. Follows a two-step reaction mechanism, wherein the carboxylate substrate first undergoes adenylation by ATP, followed by a thioesterification in the presence of CoA to yield the final CoA thioester. The protein is 4-coumarate--CoA ligase-like 5 (4CLL5) of Oryza sativa subsp. japonica (Rice).